We begin with the raw amino-acid sequence, 342 residues long: Acetoin:2,6-dichlorophenolindophenol oxidoreductase subunit beta (342 aa).

As to quaternary structure, tetramer of 2 alpha and 2 beta subunits.

It participates in ketone degradation; acetoin degradation. Functionally, catalyzes the 2,6-dichlorophenolindophenol-dependent cleavage of acetoin into acetate and acetaldehyde. This chain is Acetoin:2,6-dichlorophenolindophenol oxidoreductase subunit beta (acoB), found in Bacillus subtilis (strain 168).